Here is a 181-residue protein sequence, read N- to C-terminus: uncharacterized protein (181 aa).

Residues Met-1–Leu-178 form the Macro domain.

This is an uncharacterized protein from Sulfolobus acidocaldarius (strain ATCC 33909 / DSM 639 / JCM 8929 / NBRC 15157 / NCIMB 11770).